The following is a 1233-amino-acid chain: Structural maintenance of chromosomes protein 1A (1233 aa).

32–39 (GPNGSGKS) is an ATP binding site. Coiled coils occupy residues 104 to 124 (EYKINNKVVQLHEYSEELEKL) and 163 to 503 (ELAQ…KAEI). Positions 284–293 (IKEKDSELNQ) are enriched in basic and acidic residues. Disordered stretches follow at residues 284–307 (IKEKDSELNQKRPQYIKAKENTSH) and 350–369 (FEERMEEESQSQGRDLTLEE). Phosphoserine occurs at positions 358 and 360. Residues 515-629 (VYGRLIDLCQ…DNVEDARRIA (115 aa)) enclose the SMC hinge domain. Lys-648 and Lys-713 each carry N6-acetyllysine. Residues 660–935 (KAKARRWDEK…RHNLLQACKM (276 aa)) are a coiled coil. The interval 946–969 (TMDDISQEEGGSQGEESVSGSQRT) is disordered. Low complexity predominate over residues 953-967 (EEGGSQGEESVSGSQ). Phosphoserine occurs at positions 957, 962, 966, and 970. Positions 991 to 1068 (KDAQAEEEIK…FEQIKKERFD (78 aa)) form a coiled coil. At Lys-1037 the chain carries N6-acetyllysine.

It belongs to the SMC family. SMC1 subfamily. As to quaternary structure, forms a heterodimer with SMC3 in cohesin complexes. Cohesin complexes are composed of the SMC1 (SMC1A or meiosis-specific SMC1B) and SMC3 heterodimer attached via their SMC hinge domain, RAD21 which link them, and one STAG protein (STAG1, STAG2 or meiosis-specific STAG3), which interacts with RAD21. In germ cell cohesin complexes, SMC1A is mutually exclusive with SMC1B. Found in a complex with CDCA5, SMC3 and RAD21, PDS5A/SCC-112 and PDS5B/APRIN. Interacts with STAG3, NDC80, BRAC1, BRAT1 and RPGR. Found in a complex containing POLE and SMC3. The cohesin complex interacts with the cohesin loading complex subunits NIPBL/Scc2 (via HEAT repeats) and MAU2/Scc4. NIPBL directly contacts all members of the complex, RAD21, SMC1A/B, SMC3 and STAG1. Interacts with SYCP2. Phosphorylated upon ionizing radiation or DNA methylation. Phosphorylation of Ser-957 and Ser-966 activates it and is required for S-phase checkpoint activation. Post-translationally, ubiquitinated by the DCX(DCAF15) complex, leading to its degradation.

It localises to the nucleus. The protein localises to the chromosome. In terms of biological role, involved in chromosome cohesion during cell cycle and in DNA repair. Central component of cohesin complex. The cohesin complex is required for the cohesion of sister chromatids after DNA replication. The cohesin complex apparently forms a large proteinaceous ring within which sister chromatids can be trapped. At anaphase, the complex is cleaved and dissociates from chromatin, allowing sister chromatids to segregate. The cohesin complex may also play a role in spindle pole assembly during mitosis. Involved in DNA repair via its interaction with BRCA1 and its related phosphorylation by ATM, or via its phosphorylation by ATR. Works as a downstream effector both in the ATM/NBS1 branch and in the ATR/MSH2 branch of S-phase checkpoint. This chain is Structural maintenance of chromosomes protein 1A (Smc1a), found in Rattus norvegicus (Rat).